We begin with the raw amino-acid sequence, 300 residues long: Protoheme IX farnesyltransferase (300 aa).

The next 9 helical transmembrane spans lie at 24 to 44 (VTQLAVFCAVIGMFLATPGMV), 48 to 68 (VLLGGTVGIGLLAGSAFAINC), 94 to 114 (LQILAFSTVLGGLGAWTLYTF), 118 to 138 (LTMWLTIATFVGYAVIYTLLL), 146 to 166 (IVIGGASGAMPPALGWAAVTG), 172 to 192 (AWILVLIIFVWTPPHFWVLAL), 217 to 237 (LHILLYTVILFAVTMMPFISG), 239 to 259 (SGAVYLTSAVLLGAIFLAYAW), and 278 to 298 (IVYLSLLFAALLVDHYARPVI).

Belongs to the UbiA prenyltransferase family. Protoheme IX farnesyltransferase subfamily.

The protein localises to the cell inner membrane. The enzyme catalyses heme b + (2E,6E)-farnesyl diphosphate + H2O = Fe(II)-heme o + diphosphate. It functions in the pathway porphyrin-containing compound metabolism; heme O biosynthesis; heme O from protoheme: step 1/1. In terms of biological role, converts heme B (protoheme IX) to heme O by substitution of the vinyl group on carbon 2 of heme B porphyrin ring with a hydroxyethyl farnesyl side group. This is Protoheme IX farnesyltransferase from Burkholderia thailandensis (strain ATCC 700388 / DSM 13276 / CCUG 48851 / CIP 106301 / E264).